A 466-amino-acid polypeptide reads, in one-letter code: ATP-dependent protease ATPase subunit HslU (466 aa).

Residues Ile-18, 60 to 65, Asp-279, Glu-344, and Arg-416 contribute to the ATP site; that span reads GVGKTE.

This sequence belongs to the ClpX chaperone family. HslU subfamily. A double ring-shaped homohexamer of HslV is capped on each side by a ring-shaped HslU homohexamer. The assembly of the HslU/HslV complex is dependent on binding of ATP.

The protein resides in the cytoplasm. In terms of biological role, ATPase subunit of a proteasome-like degradation complex; this subunit has chaperone activity. The binding of ATP and its subsequent hydrolysis by HslU are essential for unfolding of protein substrates subsequently hydrolyzed by HslV. HslU recognizes the N-terminal part of its protein substrates and unfolds these before they are guided to HslV for hydrolysis. This is ATP-dependent protease ATPase subunit HslU from Lactobacillus acidophilus (strain ATCC 700396 / NCK56 / N2 / NCFM).